Consider the following 238-residue polypeptide: Insulin-like growth factor-binding protein 6 (238 aa).

The first 25 residues, 1–25 (MTWDGLPTQPLLMLLMLLFAAGSGS), serve as a signal peptide directing secretion. One can recognise an IGFBP N-terminal domain in the interval 26 to 108 (ALAGCPGCGA…LIGQGRCQRA (83 aa)). Disulfide bonds link C30–C33, C41–C45, C58–C64, C72–C85, and C79–C105. Residues 104–159 (RCQRARGPSEETTKESKPQGGASRSRDTNHRDRQKNPRTSAAPIRPNPVQDSEMGP) are disordered. 2 stretches are compositionally biased toward basic and acidic residues: residues 110–120 (GPSEETTKESK) and 127–138 (RSRDTNHRDRQK). The region spanning 157 to 232 (MGPCRRHLDS…SPDGQGSTQC (76 aa)) is the Thyroglobulin type-1 domain. 3 disulfides stabilise this stretch: C160–C188, C199–C210, and C212–C232. A disordered region spans residues 218–238 (QPLPVSPDGQGSTQCSARSSG). A compositionally biased stretch (polar residues) spans 226–238 (GQGSTQCSARSSG).

Interacts (via C-terminal domain) with PHB2. Post-translationally, O-glycosylated.

It is found in the secreted. Its function is as follows. IGF-binding proteins prolong the half-life of the IGFs and have been shown to either inhibit or stimulate the growth promoting effects of the IGFs on cell culture. They alter the interaction of IGFs with their cell surface receptors. Activates the MAPK signaling pathway and induces cell migration. The chain is Insulin-like growth factor-binding protein 6 (Igfbp6) from Mus musculus (Mouse).